We begin with the raw amino-acid sequence, 319 residues long: Cobalamin biosynthesis protein CbiB (319 aa).

5 helical membrane-spanning segments follow: residues 56–76 (VMWV…LALA), 82–102 (WFGW…RSLA), 153–173 (VDGI…LAMA), 204–224 (VANY…AGLC), and 296–316 (LMWV…CGLS).

Belongs to the CobD/CbiB family.

Its subcellular location is the cell membrane. It participates in cofactor biosynthesis; adenosylcobalamin biosynthesis. Functionally, converts cobyric acid to cobinamide by the addition of aminopropanol on the F carboxylic group. However, the true cosubstrate could be (R)-1-amino-2-propanol O-2-phosphate, leading to cobinamide phosphate. The sequence is that of Cobalamin biosynthesis protein CbiB from Salmonella paratyphi B (strain ATCC BAA-1250 / SPB7).